Consider the following 320-residue polypeptide: ATP-dependent 6-phosphofructokinase (320 aa).

Glycine 12 is an ATP binding site. ADP is bound at residue 22 to 26 (RSVIR). Residues 73–74 (RF) and 103–106 (GDGS) each bind ATP. Aspartate 104 provides a ligand contact to Mg(2+). 126–128 (TID) contacts substrate. The Proton acceptor role is filled by aspartate 128. Arginine 155 is an ADP binding site. Residues arginine 163 and 170-172 (MGR) contribute to the substrate site. ADP-binding positions include 186–188 (GAE) and 214–216 (KRH). Residues glutamate 223, arginine 244, and 250 to 253 (HIQR) contribute to the substrate site.

It belongs to the phosphofructokinase type A (PFKA) family. ATP-dependent PFK group I subfamily. Prokaryotic clade 'B1' sub-subfamily. In terms of assembly, homotetramer. Mg(2+) is required as a cofactor.

The protein localises to the cytoplasm. It carries out the reaction beta-D-fructose 6-phosphate + ATP = beta-D-fructose 1,6-bisphosphate + ADP + H(+). It functions in the pathway carbohydrate degradation; glycolysis; D-glyceraldehyde 3-phosphate and glycerone phosphate from D-glucose: step 3/4. With respect to regulation, allosterically activated by ADP and other diphosphonucleosides, and allosterically inhibited by phosphoenolpyruvate. Functionally, catalyzes the phosphorylation of D-fructose 6-phosphate to fructose 1,6-bisphosphate by ATP, the first committing step of glycolysis. In Tolumonas auensis (strain DSM 9187 / NBRC 110442 / TA 4), this protein is ATP-dependent 6-phosphofructokinase.